The chain runs to 355 residues: UDP-N-acetylglucosamine--N-acetylmuramyl-(pentapeptide) pyrophosphoryl-undecaprenol N-acetylglucosamine transferase (355 aa).

Residues 15–17, asparagine 127, arginine 163, serine 191, isoleucine 244, 263–268, and glutamine 288 each bind UDP-N-acetyl-alpha-D-glucosamine; these read TGG and ALTVSE.

The protein belongs to the glycosyltransferase 28 family. MurG subfamily.

The protein localises to the cell inner membrane. It carries out the reaction di-trans,octa-cis-undecaprenyl diphospho-N-acetyl-alpha-D-muramoyl-L-alanyl-D-glutamyl-meso-2,6-diaminopimeloyl-D-alanyl-D-alanine + UDP-N-acetyl-alpha-D-glucosamine = di-trans,octa-cis-undecaprenyl diphospho-[N-acetyl-alpha-D-glucosaminyl-(1-&gt;4)]-N-acetyl-alpha-D-muramoyl-L-alanyl-D-glutamyl-meso-2,6-diaminopimeloyl-D-alanyl-D-alanine + UDP + H(+). The protein operates within cell wall biogenesis; peptidoglycan biosynthesis. Its function is as follows. Cell wall formation. Catalyzes the transfer of a GlcNAc subunit on undecaprenyl-pyrophosphoryl-MurNAc-pentapeptide (lipid intermediate I) to form undecaprenyl-pyrophosphoryl-MurNAc-(pentapeptide)GlcNAc (lipid intermediate II). The protein is UDP-N-acetylglucosamine--N-acetylmuramyl-(pentapeptide) pyrophosphoryl-undecaprenol N-acetylglucosamine transferase of Escherichia coli O157:H7.